A 341-amino-acid polypeptide reads, in one-letter code: Cell division protein ZipA (341 aa).

The Periplasmic portion of the chain corresponds to 1–6 (MENLQL). The chain crosses the membrane as a helical span at residues 7–27 (VLFVLGAIAIVAVLVHGFWSI). The Cytoplasmic portion of the chain corresponds to 28 to 341 (RKQQPKSLKE…YLQRIRTQNS (314 aa)). 2 disordered regions span residues 35–134 (LKES…PVLS) and 157–201 (QSSL…PEPE). A compositionally biased stretch (polar residues) spans 90–100 (TLTSEGQMDSS). Positions 175–190 (SIEVPEPVSEPVLESV) are enriched in low complexity. Over residues 192-201 (EPEPVAPEPE) the composition is skewed to pro residues.

It belongs to the ZipA family. As to quaternary structure, interacts with FtsZ via their C-terminal domains.

It localises to the cell inner membrane. In terms of biological role, essential cell division protein that stabilizes the FtsZ protofilaments by cross-linking them and that serves as a cytoplasmic membrane anchor for the Z ring. Also required for the recruitment to the septal ring of downstream cell division proteins. This chain is Cell division protein ZipA, found in Shewanella sediminis (strain HAW-EB3).